The sequence spans 316 residues: MNLDYLDFEQPIAELQAKIDELRRVGTSQEINLTEEVNKLEEKNAQLTRQIFSNLTAQQIVQLARHPLRPYTLDYIQRIFTDFNELHGDRHYSQASAIIGGLARLNGEPVMVIGHQKGRTTQEKIYRNFGMARPEGFRKALRLMKLAERFSIPVITLIDTPGAYPGIGAEERNQSEAIARNLFEMAQLKIPIICTIIGEGCSGGALAIGVGDRTLMLQYAYYSVISPEGCASILWKSAEKAGEAAEALGLTANRLHELGLIDEIIKEPLGGAHRDTDAMAEKLKKHLQANLTNLQAKSANDLLEERYRRWLSYGKD.

A CoA carboxyltransferase C-terminal domain is found at 39-293; the sequence is KLEEKNAQLT…KKHLQANLTN (255 aa).

The protein belongs to the AccA family. Acetyl-CoA carboxylase is a heterohexamer composed of biotin carboxyl carrier protein (AccB), biotin carboxylase (AccC) and two subunits each of ACCase subunit alpha (AccA) and ACCase subunit beta (AccD).

It is found in the cytoplasm. It catalyses the reaction N(6)-carboxybiotinyl-L-lysyl-[protein] + acetyl-CoA = N(6)-biotinyl-L-lysyl-[protein] + malonyl-CoA. It functions in the pathway lipid metabolism; malonyl-CoA biosynthesis; malonyl-CoA from acetyl-CoA: step 1/1. In terms of biological role, component of the acetyl coenzyme A carboxylase (ACC) complex. First, biotin carboxylase catalyzes the carboxylation of biotin on its carrier protein (BCCP) and then the CO(2) group is transferred by the carboxyltransferase to acetyl-CoA to form malonyl-CoA. The chain is Acetyl-coenzyme A carboxylase carboxyl transferase subunit alpha from Coxiella burnetii (strain CbuK_Q154) (Coxiella burnetii (strain Q154)).